A 613-amino-acid polypeptide reads, in one-letter code: Spastin (613 aa).

The disordered stretch occupies residues 1–42 (MNSPGGRGKKKGSAGSSSAPPAAGASPSAPSGPAPPAPPAGA). At 1 to 61 (MNSPGGRGKK…KRNLYYFSYP (61 aa)) the chain is on the cytoplasmic side. Residues 13 to 29 (SAGSSSAPPAAGASPSA) are compositionally biased toward low complexity. Residues 30–39 (PSGPAPPAPP) are compositionally biased toward pro residues. The segment at residues 62–82 (LFAAFALLRFVAFQLGLLVAW) is an intramembrane region (helical). At 83–613 (LCERLSRGAL…WNKDFGDTTV (531 aa)) the chain is on the cytoplasmic side. The MIT domain maps to 117 to 192 (HKRAFECISM…AMAKDRLQLL (76 aa)). The interval 224–312 (SESGAVPKKK…PAARKKKDTK (89 aa)) is disordered. Polar residues-rich tracts occupy residues 237-257 (THTSNSLPRSKTVAKTGSTGL), 264-274 (PSYSGISTASV), and 281-299 (PATSTHKAAPKNSRTNKPS). 379-386 (GPPGNGKT) serves as a coordination point for ATP.

The protein belongs to the AAA ATPase family. Spastin subfamily. As to quaternary structure, homohexamer. The homohexamer is stabilized by ATP-binding. The homohexamer may adopt a ring conformation through which microtubules pass prior to being severed. Interacts with microtubules.

The protein localises to the membrane. The protein resides in the cytoplasm. Its subcellular location is the cytoskeleton. It localises to the microtubule organizing center. It is found in the centrosome. The protein localises to the perinuclear region. The protein resides in the nucleus. The catalysed reaction is n ATP + n H2O + a microtubule = n ADP + n phosphate + (n+1) alpha/beta tubulin heterodimers.. Its function is as follows. ATP-dependent microtubule severing protein that specifically recognizes and cuts microtubules that are polyglutamylated. Preferentially recognizes and acts on microtubules decorated with short polyglutamate tails: severing activity increases as the number of glutamates per tubulin rises from one to eight, but decreases beyond this glutamylation threshold. Microtubule severing promotes reorganization of cellular microtubule arrays and the release of microtubules from the centrosome following nucleation. Required for membrane traffic from the endoplasmic reticulum (ER) to the Golgi and for completion of the abscission stage of cytokinesis. Also plays a role in axon growth and the formation of axonal branches. The sequence is that of Spastin from Gallus gallus (Chicken).